We begin with the raw amino-acid sequence, 1869 residues long: Chitin synthase 6 (1869 aa).

Residues 1 to 23 are disordered; that stretch reads MAMNLPPLAGSGGAHTQPSLPAL. In terms of domain architecture, Myosin motor spans 1 to 778; sequence MAMNLPPLAG…EIAHLSEASL (778 aa). 104-111 serves as a coordination point for ATP; it reads GESGSGKS. N-linked (GlcNAc...) asparagine glycosylation is found at Asn123, Asn417, Asn426, and Asn557. 2 disordered regions span residues 593–612 and 620–640; these read KPMR…ARNQ and AEEE…AAKA. Low complexity predominate over residues 629–640; sequence ENNSQAGGAAKA. N-linked (GlcNAc...) asparagine glycosylation is found at Asn630 and Asn657. An actin-binding region spans residues 655–679; the sequence is LDNVTKAVADPSTNSYFVFCLKPND. Helical transmembrane passes span 886 to 906 and 925 to 945; these read WLFM…RFIG and LIIW…PMLI. Residues 949-1010 enclose the Cytochrome b5 heme-binding domain; sequence QHVYSAAELS…YAGKDATSLF (62 aa). 3 N-linked (GlcNAc...) asparagine glycosylation sites follow: Asn1037, Asn1062, and Asn1165. Residues 1201–1221 traverse the membrane as a helical segment; that stretch reads LVLAISIMLVTIIAFKFFAAL. 2 N-linked (GlcNAc...) asparagine glycosylation sites follow: Asn1458 and Asn1564. 3 helical membrane passes run 1596–1616, 1622–1642, and 1649–1669; these read LSTV…VMVI, VPVT…IIFI, and MIGW…GLPL. An N-linked (GlcNAc...) asparagine glycan is attached at Asn1778. The region spanning 1811–1866 is the DEK-C domain; sequence LPSDDALLAEIREILRTADLMTVTKKGIKQELERRFGVPLDAKRAYINSATEALLS.

This sequence in the N-terminal section; belongs to the TRAFAC class myosin-kinesin ATPase superfamily. Myosin family. The protein in the C-terminal section; belongs to the chitin synthase family. Class V subfamily.

The protein localises to the cell membrane. The enzyme catalyses [(1-&gt;4)-N-acetyl-beta-D-glucosaminyl](n) + UDP-N-acetyl-alpha-D-glucosamine = [(1-&gt;4)-N-acetyl-beta-D-glucosaminyl](n+1) + UDP + H(+). Polymerizes chitin, a structural polymer of the cell wall and septum, by transferring the sugar moiety of UDP-GlcNAc to the non-reducing end of the growing chitin polymer. Plays a role in cell wall integrity and is involved in tolerance to hyperosmotic conditions. Required to successfully penetrate the host plants and thus plays a key role in pathogenicity. This is Chitin synthase 6 from Verticillium dahliae (strain VdLs.17 / ATCC MYA-4575 / FGSC 10137) (Verticillium wilt).